The primary structure comprises 359 residues: MLYCRSGFEKECAGEIQDKATQLEVYGFPRVKKNSGYVVFECYQDGDAEKLVKGLDFSSLIFARQMFAVAAEFEALPSEDRISPILAELSEFESFPRCGDLRIETPDTNEAKELLKFCRKFTVPMRQALRGKGLMWNKDNAKKPVLHICFVAPGHCYVGYSLPGNNSQFFMGIPRLKFPADAPSRSTLKLEEAFHVFIPRDEWDERLAPGMWGVDLGACPGGWTYQLVKRSMFVHCVDNGMMADSLMETGQIKHHMVDGFKFEPDRKNVTWIVCDMVEKPARVAHLMGQWLLKGWAKEAIFNLKLPMKGRYDEVLQDLENLKMFLIENKVKFKLQAKHLYHDREEITIHIQCLSNISPH.

Residues Ser186, 219-222, Asp238, Asp258, and Asp275 contribute to the S-adenosyl-L-methionine site; that span reads CPGG. Lys304 functions as the Proton acceptor in the catalytic mechanism.

Belongs to the class I-like SAM-binding methyltransferase superfamily. RNA methyltransferase RlmE family. RlmM subfamily. Monomer.

It localises to the cytoplasm. It catalyses the reaction cytidine(2498) in 23S rRNA + S-adenosyl-L-methionine = 2'-O-methylcytidine(2498) in 23S rRNA + S-adenosyl-L-homocysteine + H(+). Catalyzes the 2'-O-methylation at nucleotide C2498 in 23S rRNA. This chain is Ribosomal RNA large subunit methyltransferase M, found in Vibrio parahaemolyticus serotype O3:K6 (strain RIMD 2210633).